The sequence spans 923 residues: Ubiquitin carboxyl-terminal hydrolase 10 (923 aa).

In terms of domain architecture, DUSP spans 19–134; sequence FTPEEEKRIV…GGPPIERKLI (116 aa). The segment at 65 to 91 is disordered; that stretch reads NECSTGESSEAPRPGPIDNHDIIESDS. Residues 304 to 895 form the USP domain; the sequence is AGLSNLGNTC…AAYVLFYRRV (592 aa). The active-site Nucleophile is Cys-313. The Proton acceptor role is filled by His-853.

It belongs to the peptidase C19 family.

It carries out the reaction Thiol-dependent hydrolysis of ester, thioester, amide, peptide and isopeptide bonds formed by the C-terminal Gly of ubiquitin (a 76-residue protein attached to proteins as an intracellular targeting signal).. Recognizes and hydrolyzes the peptide bond at the C-terminal Gly of ubiquitin. Involved in the processing of poly-ubiquitin precursors as well as that of ubiquitinated proteins. This Arabidopsis thaliana (Mouse-ear cress) protein is Ubiquitin carboxyl-terminal hydrolase 10 (UBP10).